Reading from the N-terminus, the 425-residue chain is MAKQIQAIRGMNDCLPEQSPVWQKVEQILRQVVASYGYSEVRMPIVEQTHLFKRAIGEVTDVVEKEMYTFEDRNGDSLSLRPEGTASCVRAGIEHGLLYNQERRMWYMGPMFRHERPQKGRYRQFHQFGVELFGINGPDIDAELIMLTHRLWRLFGISDHVTLQLNTLGQSSERAAYRDALVAYLEQYKDQLDEESQRRMYSNPLRVLDSKDERVQAILVKAPRLFDHLGEESLAHFEGLKRLLESAGIKYEVNERLVRGLDYYNLTVFEWVTTSLGAQGTVCAGGRYDGLVEQLGGQATPAVGFAMGMERLVLMLETLELNADIRPAVDVYLAMVGEGSEQAGFQLAERLRDALPDLRLMSHCGGGNFKKQLKRADKSGAAIALILGETEVQNGEITIKYLRGQAEQQTVTVDAAIALLAAKGD.

It belongs to the class-II aminoacyl-tRNA synthetase family. As to quaternary structure, homodimer.

Its subcellular location is the cytoplasm. It carries out the reaction tRNA(His) + L-histidine + ATP = L-histidyl-tRNA(His) + AMP + diphosphate + H(+). In Aeromonas salmonicida (strain A449), this protein is Histidine--tRNA ligase.